A 102-amino-acid polypeptide reads, in one-letter code: Small ribosomal subunit protein uS10 (102 aa).

The protein belongs to the universal ribosomal protein uS10 family. Part of the 30S ribosomal subunit.

Involved in the binding of tRNA to the ribosomes. The sequence is that of Small ribosomal subunit protein uS10 from Streptococcus sanguinis (strain SK36).